The chain runs to 433 residues: Dihydroorotase (433 aa).

2 residues coordinate Zn(2+): H63 and H65. Substrate is bound by residues 65 to 67 and N97; that span reads HLR. Residues D155, H182, and H235 each contribute to the Zn(2+) site. N283 provides a ligand contact to substrate. Residue D310 coordinates Zn(2+). D310 is a catalytic residue. H314 contacts substrate.

It belongs to the metallo-dependent hydrolases superfamily. DHOase family. Class I DHOase subfamily. Zn(2+) serves as cofactor.

The catalysed reaction is (S)-dihydroorotate + H2O = N-carbamoyl-L-aspartate + H(+). It participates in pyrimidine metabolism; UMP biosynthesis via de novo pathway; (S)-dihydroorotate from bicarbonate: step 3/3. Its function is as follows. Catalyzes the reversible cyclization of carbamoyl aspartate to dihydroorotate. The protein is Dihydroorotase of Anaeromyxobacter sp. (strain K).